Here is a 172-residue protein sequence, read N- to C-terminus: Acetolactate synthase small subunit (172 aa).

Positions 4–78 (TLSVLVEDEA…NILKVDNITE (75 aa)) constitute an ACT domain.

The protein belongs to the acetolactate synthase small subunit family. Dimer of large and small chains.

The protein resides in the plastid. Its subcellular location is the chloroplast. It carries out the reaction 2 pyruvate + H(+) = (2S)-2-acetolactate + CO2. It functions in the pathway amino-acid biosynthesis; L-isoleucine biosynthesis; L-isoleucine from 2-oxobutanoate: step 1/4. Its pathway is amino-acid biosynthesis; L-valine biosynthesis; L-valine from pyruvate: step 1/4. The polypeptide is Acetolactate synthase small subunit (ilvH) (Cyanidium caldarium (Red alga)).